The following is a 229-amino-acid chain: 2,3-bisphosphoglycerate-dependent phosphoglycerate mutase (229 aa).

Substrate contacts are provided by residues 7-14 (RHGQSEWN), 20-21 (TG), Arg-59, 86-89 (ERHY), Lys-97, 113-114 (RR), and 182-183 (GN). His-8 functions as the Tele-phosphohistidine intermediate in the catalytic mechanism. Residue Glu-86 is the Proton donor/acceptor of the active site.

The protein belongs to the phosphoglycerate mutase family. BPG-dependent PGAM subfamily.

The catalysed reaction is (2R)-2-phosphoglycerate = (2R)-3-phosphoglycerate. The protein operates within carbohydrate degradation; glycolysis; pyruvate from D-glyceraldehyde 3-phosphate: step 3/5. Its function is as follows. Catalyzes the interconversion of 2-phosphoglycerate and 3-phosphoglycerate. This is 2,3-bisphosphoglycerate-dependent phosphoglycerate mutase from Listeria innocua serovar 6a (strain ATCC BAA-680 / CLIP 11262).